Reading from the N-terminus, the 183-residue chain is Adenine phosphoribosyltransferase (183 aa).

It belongs to the purine/pyrimidine phosphoribosyltransferase family. Homodimer.

The protein resides in the cytoplasm. It catalyses the reaction AMP + diphosphate = 5-phospho-alpha-D-ribose 1-diphosphate + adenine. It participates in purine metabolism; AMP biosynthesis via salvage pathway; AMP from adenine: step 1/1. Functionally, catalyzes a salvage reaction resulting in the formation of AMP, that is energically less costly than de novo synthesis. This is Adenine phosphoribosyltransferase from Shewanella pealeana (strain ATCC 700345 / ANG-SQ1).